A 118-amino-acid chain; its full sequence is Putative pterin-4-alpha-carbinolamine dehydratase (118 aa).

This sequence belongs to the pterin-4-alpha-carbinolamine dehydratase family.

It carries out the reaction (4aS,6R)-4a-hydroxy-L-erythro-5,6,7,8-tetrahydrobiopterin = (6R)-L-erythro-6,7-dihydrobiopterin + H2O. The protein is Putative pterin-4-alpha-carbinolamine dehydratase of Stutzerimonas stutzeri (strain A1501) (Pseudomonas stutzeri).